Consider the following 386-residue polypeptide: Leupaxin (386 aa).

An N-acetylmethionine modification is found at Met1. The LD motif 1 motif lies at 3-15 (ELDALLEELERST). The interval 13 to 41 (RSTLQDSDEYSNPAPLPLDQHSRKETNLD) is disordered. Residue Ser19 is modified to Phosphoserine. Tyr22 carries the phosphotyrosine modification. Ser54 is modified (phosphoserine). Tyr62 is subject to Phosphotyrosine. 2 short sequence motifs (LD motif) span residues 70–82 (NVYS…KESP) and 92–103 (QLDELMAHLTEM). Tyr72 is modified (phosphotyrosine; by LYN). Residue Ser81 is modified to Phosphoserine. LIM zinc-binding domains lie at 150-208 (GHCA…QLFS), 209-267 (PRCA…AMFS), 268-326 (PKCG…HRRG), and 327-386 (TLCH…LFPL).

This sequence belongs to the paxillin family. As to quaternary structure, interacts with PTPN22. Interacts with unphosphorylated ITGA4. Interacts with PTK2B/PYK2, PTPN12, AR and SRF. Interacts (via LD motif 3) with LYN and the interaction is induced upon B-cell antigen receptor (BCR) activation. Interacts (via LD motif 3) with PTK2/FAK. In terms of processing, phosphorylated on tyrosine residues. Phosphorylation on Tyr-72 is important for its inhibitory function. Bombesin stimulates phosphorylation on Tyr-22, Tyr-62 and Tyr-72. In terms of tissue distribution, macrophages, monocytes and osteoclasts (at protein level). Strongly expressed in cells and tissues of hematopoietic origin. Highest expression in lymphoid tissues such as spleen, lymph node, thymus and appendix and in the vascular smooth muscle. Lower levels in bone marrow and fetal liver. Also expressed in peripheral blood lymphocytes and a number of hematopoietic cell lines. Very low levels found in epithelial cell lines. Expressed in prostate cancer (PCa) cells and its expression intensity is directly linked to PCa progression.

It localises to the cytoplasm. The protein localises to the cell junction. The protein resides in the focal adhesion. Its subcellular location is the nucleus. It is found in the perinuclear region. It localises to the cell projection. The protein localises to the podosome. The protein resides in the cell membrane. Its function is as follows. Transcriptional coactivator for androgen receptor (AR) and serum response factor (SRF). Contributes to the regulation of cell adhesion, spreading and cell migration and acts as a negative regulator in integrin-mediated cell adhesion events. Suppresses the integrin-induced tyrosine phosphorylation of paxillin (PXN). May play a critical role as an adapter protein in the formation of the adhesion zone in osteoclasts. Negatively regulates B-cell antigen receptor (BCR) signaling. The polypeptide is Leupaxin (LPXN) (Homo sapiens (Human)).